A 351-amino-acid chain; its full sequence is Autoinducer 2 import system permease protein LsrC (351 aa).

Transmembrane regions (helical) follow at residues 14 to 34 (LLAI…YFSL), 39 to 59 (MIFS…LVML), 70 to 90 (ITGL…GLAA), 93 to 113 (LFAL…VTWL), 115 to 135 (IPAI…MLLL), 155 to 175 (ILFS…AMAW), 213 to 233 (MNGV…GFIP), 252 to 272 (GISL…AFLL), and 284 to 304 (LPAW…LVFD).

It belongs to the binding-protein-dependent transport system permease family. AraH/RbsC subfamily. The complex is composed of two ATP-binding proteins (LsrA), two transmembrane proteins (LsrC and LsrD) and a solute-binding protein (LsrB).

The protein localises to the cell inner membrane. Its function is as follows. Part of the ABC transporter complex LsrABCD involved in autoinducer 2 (AI-2) import. Probably responsible for the translocation of the substrate across the membrane. This is Autoinducer 2 import system permease protein LsrC (lsrC) from Yersinia pestis bv. Antiqua (strain Antiqua).